Reading from the N-terminus, the 206-residue chain is FMN-dependent NADH:quinone oxidoreductase (206 aa).

Residues S9, 15–17, and 139–142 contribute to the FMN site; these read SVS and SRGG.

Belongs to the azoreductase type 1 family. Homodimer. FMN is required as a cofactor.

It carries out the reaction 2 a quinone + NADH + H(+) = 2 a 1,4-benzosemiquinone + NAD(+). The enzyme catalyses N,N-dimethyl-1,4-phenylenediamine + anthranilate + 2 NAD(+) = 2-(4-dimethylaminophenyl)diazenylbenzoate + 2 NADH + 2 H(+). Quinone reductase that provides resistance to thiol-specific stress caused by electrophilic quinones. Its function is as follows. Also exhibits azoreductase activity. Catalyzes the reductive cleavage of the azo bond in aromatic azo compounds to the corresponding amines. This is FMN-dependent NADH:quinone oxidoreductase from Cupriavidus necator (strain ATCC 17699 / DSM 428 / KCTC 22496 / NCIMB 10442 / H16 / Stanier 337) (Ralstonia eutropha).